Here is a 1888-residue protein sequence, read N- to C-terminus: Tensin-1 (1888 aa).

Over residues 21–31 (PQPPGTPPGPA) the composition is skewed to pro residues. Residues 21–45 (PQPPGTPPGPARPERCEPGGAAPDP) form a disordered region. Residues 61-108 (THHFKVKAFKKVKPCGICRQAITREGCVCKVCSFSCHRKCQAKVAAPC) form a Phorbol-ester/DAG-type zinc finger. Residues 132–174 (GEGDCRVGSSPKNLEEGGSMRVSPSIQPQPQSQPTSLSRNTSV) are disordered. The span at 154 to 167 (SPSIQPQPQSQPTS) shows a compositional bias: low complexity. In terms of domain architecture, Phosphatase tensin-type spans 175–347 (SRAMEDSCEL…HYFSGLLSGS (173 aa)). A C2 tensin-type domain is found at 352 to 478 (NKPLFLHHVI…GKVEFVFSYG (127 aa)). Serine 509 and serine 535 each carry phosphoserine. Residue tyrosine 537 is modified to Phosphotyrosine. 3 disordered regions span residues 543–608 (KDSL…PQEK), 696–722 (VTNTSESGYPETLSPLTNGLDKPYSTE), and 789–854 (RSQS…SAET). Serine 549 is modified (phosphoserine). Over residues 571-584 (LSVSSDSGNSTAST) the composition is skewed to polar residues. Serine 604 carries the phosphoserine modification. Position 792 is a phosphoserine (serine 792). Residues 835 to 852 (RSPLQSLARSKPSPQLSA) show a composition bias toward polar residues. Residue serine 867 is modified to Phosphoserine. 2 disordered regions span residues 893–1077 (PLHK…RSPV) and 1109–1555 (EEME…AGSL). Residues 905–922 (PGASPLSSQPLLGSSRQS) are compositionally biased toward low complexity. 3 positions are modified to phosphoserine: serine 930, serine 935, and serine 952. Residues 962-986 (GSNQSFHPKSPASSTFLPSPHSSAG) are compositionally biased toward polar residues. Threonine 1015 carries the phosphothreonine modification. Serine 1054 is modified (phosphoserine). Positions 1057-1069 (QYENQSPEATSPR) are enriched in polar residues. At tyrosine 1058 the chain carries Phosphotyrosine. 3 positions are modified to phosphoserine: serine 1062, serine 1118, and serine 1122. Positions 1169–1179 (EVTKPPEEPRS) are enriched in basic and acidic residues. Residues 1227–1239 (SPSPLSTSSPILS) are compositionally biased toward low complexity. The segment covering 1240–1257 (ADSTSVGSFPSVVSSDQG) has biased composition (polar residues). Phosphoserine is present on serine 1279. Residues 1284–1300 (SYQSSSPVPVGGSSYNS) show a composition bias toward low complexity. Polar residues predominate over residues 1301 to 1322 (PDYSLQPFSSSPESQGQPQYSA). Serine 1321 carries O-linked (GalNAc...) serine glycosylation. At serine 1331 the chain carries Phosphoserine. Threonine 1343 is modified (phosphothreonine). Serine 1346 carries the phosphoserine modification. Phosphothreonine is present on threonine 1420. Serine 1423 bears the Phosphoserine mark. Positions 1436–1446 (NLASSLHSNAV) are enriched in polar residues. 3 positions are modified to phosphoserine: serine 1448, serine 1463, and serine 1468. The segment covering 1490 to 1507 (LSRQSSASGYQAPSTPSF) has biased composition (polar residues). Residues 1518–1530 (SSPATSPSPDSAA) show a composition bias toward low complexity. A phosphoserine mark is found at serine 1535, serine 1547, serine 1554, and serine 1599. The 110-residue stretch at 1616-1725 (WYKPEISREQ…ALPCKLVIPS (110 aa)) folds into the SH2 domain. Serine 1741 carries the post-translational modification Phosphoserine. The 135-residue stretch at 1751–1885 (ACNVLFVNSV…FVSKVMLSAG (135 aa)) folds into the PTB domain.

This sequence belongs to the PTEN phosphatase protein family. As to quaternary structure, binds to actin filaments and interacts with phosphotyrosine-containing proteins. Interacts with STARD8. Interacts with protein phosphatase PPP1CA. Interacts (via N-terminus) with Rho GTPase-activating protein DLC1; the interaction is decreased by phosphorylation of TNS1. Interacts with tyrosine-phosphorylated proteins BCAR1/p130Cas and PTK2/FAK; the interactions are increased by phosphorylation of TNS1. Post-translationally, extensively phosphorylated on serine and threonine residues in a p38 MAPK-dependent manner which reduces interaction with DLC1 and increases interaction with tyrosine-phosphorylated proteins including BCAR1/p130cas and PTK2/FAK. The majority of the phosphorylated Ser/Thr residues are immediately adjacent to a proline residue. Also phosphorylated on tyrosine residues. In terms of processing, rapidly cleaved by calpain II.

It localises to the cell surface. It is found in the cell junction. The protein localises to the focal adhesion. The protein resides in the cytoplasm. Its subcellular location is the cytoskeleton. Its function is as follows. May act as a protein phosphatase and/or a lipid phosphatase. Involved in fibrillar adhesion formation. Essential for myofibroblast differentiation and myofibroblast-mediated extracellular matrix deposition. Enhances RHOA activation in the presence of DLC1. Plays a role in cell polarization and migration. May be involved in cartilage development and in linking signal transduction pathways to the cytoskeleton. In Mus musculus (Mouse), this protein is Tensin-1.